The following is a 79-amino-acid chain: Cell division protein ZapB (79 aa).

A coiled-coil region spans residues 3–79 (LEVFEKLEAK…QALLGRMEEV (77 aa)).

This sequence belongs to the ZapB family. As to quaternary structure, homodimer. The ends of the coiled-coil dimer bind to each other, forming polymers. Interacts with FtsZ.

It localises to the cytoplasm. Its function is as follows. Non-essential, abundant cell division factor that is required for proper Z-ring formation. It is recruited early to the divisome by direct interaction with FtsZ, stimulating Z-ring assembly and thereby promoting cell division earlier in the cell cycle. Its recruitment to the Z-ring requires functional FtsA or ZipA. The sequence is that of Cell division protein ZapB from Salmonella typhi.